Consider the following 175-residue polypeptide: Small ribosomal subunit protein uS5 (175 aa).

Residues 1-21 (MAKPERNKKPQQAEERDDGMR) are disordered. The region spanning 20–83 (MREKMVAVNR…EEARRKMAKV (64 aa)) is the S5 DRBM domain.

This sequence belongs to the universal ribosomal protein uS5 family. In terms of assembly, part of the 30S ribosomal subunit. Contacts proteins S4 and S8.

In terms of biological role, with S4 and S12 plays an important role in translational accuracy. Functionally, located at the back of the 30S subunit body where it stabilizes the conformation of the head with respect to the body. The chain is Small ribosomal subunit protein uS5 from Dechloromonas aromatica (strain RCB).